The chain runs to 338 residues: Glyceraldehyde-3-phosphate dehydrogenase, cytosolic (338 aa).

NAD(+) is bound by residues 13–14 (RI), Asp35, and Arg82. D-glyceraldehyde 3-phosphate is bound by residues 153-155 (SCT), Thr184, 213-214 (TG), and Arg236. The active-site Nucleophile is Cys154. Asn318 provides a ligand contact to NAD(+).

This sequence belongs to the glyceraldehyde-3-phosphate dehydrogenase family. Homotetramer.

The protein resides in the cytoplasm. It catalyses the reaction D-glyceraldehyde 3-phosphate + phosphate + NAD(+) = (2R)-3-phospho-glyceroyl phosphate + NADH + H(+). The protein operates within carbohydrate degradation; glycolysis; pyruvate from D-glyceraldehyde 3-phosphate: step 1/5. Its function is as follows. Key enzyme in glycolysis that catalyzes the first step of the pathway by converting D-glyceraldehyde 3-phosphate (G3P) into 3-phospho-D-glyceroyl phosphate. Essential for the maintenance of cellular ATP levels and carbohydrate metabolism. The chain is Glyceraldehyde-3-phosphate dehydrogenase, cytosolic (GAPC) from Dianthus caryophyllus (Carnation).